We begin with the raw amino-acid sequence, 302 residues long: Vacuolar iron transporter (302 aa).

Residues 1–70 (MPASGAGYAG…HTNTSSDYVK (70 aa)) are Cytoplasmic-facing. A helical transmembrane segment spans residues 71 to 91 (AVVFGGLDGIVTIFAIVAGCV). Over 92-99 (GADLSCSQ) the chain is Vacuolar. The helical transmembrane segment at 100-120 (VLMVGLGNLLADAISMGFGEY) threads the bilayer. The Cytoplasmic segment spans residues 121-211 (VSAAAEKDFV…IKRGLVMFTA (91 aa)). Residues Glu-137, Glu-140, Glu-148, Glu-151, Met-185, and Glu-189 each contribute to the Fe cation site. A helical transmembrane segment spans residues 212–232 (FCFFGLLPLAGFIGWVAAFGL). Residues 233–235 (GAE) are Vacuolar-facing. Residues 236-256 (ADMAFLMACVVSIMTLFILGF) form a helical membrane-spanning segment. At 257 to 276 (SKGKFVGQNPTKSACLMAMN) the chain is on the cytoplasmic side. A helical transmembrane segment spans residues 277 to 297 (GGCAGTVAYGVGSLLQLVVGA). Topologically, residues 298–302 (NLTAA) are vacuolar.

Belongs to the CCC1 family.

It is found in the vacuole membrane. It catalyses the reaction Fe(2+)(in) = Fe(2+)(out). In terms of biological role, vacuolar iron transporter involved in the transfer of iron ions from the cytosol to the vacuole for intracellular iron storage. Plays an essential role in detoxification of excess iron. Important for parasite survival within macrophages and parasite virulence in vivo. The sequence is that of Vacuolar iron transporter from Toxoplasma gondii (strain ATCC 50861 / VEG).